The following is a 320-amino-acid chain: Endolytic peptidoglycan transglycosylase RlpA (320 aa).

Belongs to the RlpA family.

Functionally, lytic transglycosylase with a strong preference for naked glycan strands that lack stem peptides. In Rickettsia typhi (strain ATCC VR-144 / Wilmington), this protein is Endolytic peptidoglycan transglycosylase RlpA.